Consider the following 322-residue polypeptide: Prephenate dehydratase (322 aa).

Residues 5–191 (RIAYLGPEGT…ARTRFVLVGM (187 aa)) form the Prephenate dehydratase domain. The ACT domain maps to 205-282 (SAVLRIDNAP…ADVCYLGSWP (78 aa)). Positions 286 to 322 (ATGPTVSPPPPDEASRWLARLRAGKPDQASEPGGGKL) are disordered.

In terms of assembly, homodimer.

It carries out the reaction prephenate + H(+) = 3-phenylpyruvate + CO2 + H2O. The protein operates within amino-acid biosynthesis; L-phenylalanine biosynthesis; phenylpyruvate from prephenate: step 1/1. In Mycobacterium leprae (strain Br4923), this protein is Prephenate dehydratase (pheA).